We begin with the raw amino-acid sequence, 591 residues long: V-type ATP synthase alpha chain (591 aa).

Residue 242 to 249 (GPFGAGKT) coordinates ATP.

Belongs to the ATPase alpha/beta chains family.

It carries out the reaction ATP + H2O + 4 H(+)(in) = ADP + phosphate + 5 H(+)(out). Functionally, produces ATP from ADP in the presence of a proton gradient across the membrane. The V-type alpha chain is a catalytic subunit. This Chlamydia abortus (strain DSM 27085 / S26/3) (Chlamydophila abortus) protein is V-type ATP synthase alpha chain.